We begin with the raw amino-acid sequence, 5043 residues long: MRNNDNIRILTNPSVSHGEPLHISEKQPATIPEVLYRTATELGDTKGIIYLQPDGTEVYQSYRRLWDDGLRIAKGLRQSGLKAKQSVILQLGDNSQLLPAFWGCVLTGVVPAPLAVPPTYAESSSGTQKLKDAWTLLDKPAVITDRGMHQEMLDWAKEQGLEGFRAIIVEDLLSAEADTDWHQSSPEDLALLLLTSGSTGTPKAVMLNHRNIMSMVKGIIQMQGFTREDITFNWMPFDHVGGIGMLHLRDVYLGCQEINVSSETILMEPLKWLDWIDHYRASVTWAPNFAFGLVTDFAEEIKDKKWDLSSMRYMLNGGEAMVAKVGRRILELLEPHGLPADAIRPAWGMSETSSGVIFSHEFTRAGTSDDDHFVEIGSPIPGFSMRIVNDHNELVEEGEIGRFQVSGLSVTSGYYQRPDLNESVFTEDGWFETGDLGFLRNGRLTITGRTKDAIIINGINYYSHAIESAVEELPEIETSYTAACAVRLGQNSTDQLAIFFVTSAKLNDEQMSQLLRNIQSHVSQVIGVTPEYLLPVQKEEIPKTAIGKIQRTQLKTSFENGEFDHLLHKPNRMNDAVQDEGIQQADQVKRVREEIQKHLLTCLTEELHVSHDWVEPNANIQSLGVNSIKMMKLIRSIEKNYHIKLTAREIHQYPTIERLASYLSEHEDLSSLSADKKGTDTYKTEPERSQATFQPLSEVQKGLWTLQKMSPEKSAYHVPLCFKFSSGLHHETFQQAFGLVLNQHPILKHVIQEKDGVPFLKNEPALSIEIKTENISSLKESDIPAFLRKKVKEPYVKENSPLVRVMSFSRSEQEHFLLVVIHHLIFDGVSSVTFIRSLFDTYQLLLKGQQPEKAVSPAIYHDFAAWEKNMLAGKDGVKHRTYWQKQLSGTLPNLQLPNVSASSVDSQFREDTYTRRLSSGFMNQVRTFAKEHSVNVTTVFLSCYMMLLGRYTGQKEQIVGMPAMVRPEERFDDAIGHFLNMLPIRSELNPADTFSSFISKLQLTILDGLDHAAYPFPKMVRDLNIPRSQAGSPVFQTAFFYQNFLQSGSYQSLLSRYADFFSVDFVEYIHQEGEYELVFELWETEEKMELNIKYNTGLFDAASISAMFDHFVYVTEQAMLNPSQPLKEYSLLPEAEKQMILKTWNATGKTYPYITFHELFEQQAKKTPDRAAVSYEGQTLTYRELDEKSTQLAIYLQAHGVGPDRLAGIYVDRSLDMLVGLLAILKAGGAYVPLDPSYPAERLEYMLEDSEVFITLTTSELVNTLSWNGVTTALLDQDWDEIAQTASDRKVLTRTVTPENLAYVIYTSGSTGKPKGVMIPHKALTNFLVSMGETPGLTAEDKMLAVTTYCFDIAALELFLPLIKGAHCYICQTEHTKDVEKLKRDIRAIKPTVMQATPATWKMLFYSGWENEESVKILCGGEALPETLKRYFLDTGSEAWNMFGPTETTIWSAVQRINVECSHATIGRPIANTQIYITDSQLAPVPAGVPGELCIAGDGVAKGYYKKEELTDSRFIDNPFEPGSKLYRTGDMARWLTGGRIEYIGRIDNQVKIRGFRIELGDIESRLSEHPGILECVVVADMDNLAAYYTAKHANASLTARELRHFVKNALPAYMVPSYFIQLDHMPLTPNGKIDRNSLKNIDLSGEQLKQRQTSPKNIQDTVFTIWQEVLKTSDIEWDDGFFDVGGDSLLAVTVADRIKHELSCEFSVTDLFEYSTIKNISQYITEQRMGDASDHIPTDPAAHIEDQSTEMSDLPDYYDDSVAIIGISCEFPGAKNHDEFWENLRDGKESIAFFNKEELQRFGISKEIAENADYVPAKASIDGKDRFDPSFFQISPKDAEFMDPQLRMLLTHSWKAIEDAGYAARQIPQTSVFMSASNNSYRALLPSDTTESLETPDGYVSWVLAQSGTIPTMISHKLGLRGPSYFVHANCSSSLIGLHSAYKSLLSGESDYALVGGATLHTESNIGYVHQPGLNFSSDGHIKAFDASADGMIGGEGVAVVLLKKAADAVKDGDHIYALLRGIGVNNDGADKVGFYAPSVKGQADVVQQVMNQTKVQPESICYVEAHGTGTKLGDPIELAALTNVYRQYTNKTQFCGIGSVKTNIGHLDTAAGLAGCIKVVMSLYHQELAPSVNYKEPNPNTDLASSPFYVVDQKKTLSREIKTHRAALSSFGLGGTNTHAIFEQFKRDSDKGKIDGTCIVPISAKNKERLQEYAEDILAYLERRGFENSQLPDFAYTLQVGREAMEHRVVFIADHVNELKQRLTDFINGNTAIEGCFQGSKHNAREVSWLTEDEDSAELIRKWMAKGKVNKLAEMWSKGAHIDWMQLYKGERPNRMSLPTYPFAKERYWPSQDDRKPVAQISGNQTGIGSIHPLLHQNTSDFSEQKFSSVFTGDEFFLRDHVVRGKPVLPGVAYLEMAYAAINQAAGSEIGQDVRIRLNHTVWVQPVVVDRHSAQVDISLFPEEDGKITFDIYSTQEDGDDPVIHSQGSAELASAAETPVADLTEMSRRCGKGKMSPDQFYEEGRSRGMFHGPAFQGIKNVNIGNREVLAQLQLPEIVSGTNEQFVLHPSIMDSALQTATICIMQELTDQKLILPFALEELEVIKGCSSSMWAYARLSDSDHSGGVVQKADIDVIDESGTVCVRIKGFSTRVLEGEVHTSKPSTRHERLMLEPVWEKQNEEREDEDLSYTEHIIVLFETERSVTDSIASHMKDARVITLNEAVGHIAERYQCYMQNIFELLQSKVRKLSAGRIIIQAIVPLEKEKQLFAGVSGLFKTAEIEFSKLTAQVIEIEKPEEMIDLHLKLKDDSRRPFDKQIRYEAGYRFVKGWREMVLPSADTLHMPWRDEGVYLITGGAGSLGLLFAKEIANRTGRSTIVLTGRSVLSEDKENELEALRSIGAEVVYREADVSDQHAVRHLLEEIKERYGTLNGIIHGAGSSKDRFIIHKTNEEFQEVLQPKVSGLLHVDECSKDFPLDFFIFFSSVSGCLGNAGQADYAAANSFMDAFAEYRRSLAASKKRFGSTISFNWPLWEEGGMQVGAEDEKRMLKTTGMVPMPTDSGLKAFYQGIVSDKPQVFVMEGQLQKMKQKLLSAGSKAKRNDQRKADQDQGQTRKLEAALIQMVGAILKVNTDDIDVNTELSEYGFDSVTFTVFTNKINEKFQLELTPTIFFEYGSVQSLAEYVVAAYQGEWNQDATAKGKDERTNLVHSLSSLEASLSNMVSAILKVNSEDIDVNTELSEYGFDSVTFTVFTNKINEEFQLELTPTIFFEYGSLHSLAEYLTVEHGDTLVQEREKPEGQEELQTKSSEAPKITSRRKRRFTQPIIAKAERNKKQAADFEPVAIVGISGRFPGAMDIDEFWKNLEEGKDSITEVPKDRWDWREHYGNPDTDVNKTDIKWGGFIDGVAEFDPLFFGISPREADYVDPQQRLLMTYVWKALEDAGCSPQSLSGTGTGIFIGTGNTGYKDLFHRANLPIEGHAATGHMIPSVGPNRMSYFLNIHGPSEPVETACSSSLVAIHRAVTAMQNGDCEMAIAGGVNTILTEEAHISYSKAGMLSTDGRCKTFSADANGYVRGEGVGMVMLKKLEDAERDGNHIYGVIRGTAENHGGRANTLTSPNPKAQADLLVRAYRQADIDPSTVTYIEAHGTGTELGDPIEINGLKAAFKELSNMRGESQPDVPDHRCGIGSVKSNIGHLELAAGISGLIKVLLQMKHKTLVKSLHCETLNPYLQLTDSPFYIVQEKQEWKSVTDRDGNELPRRAGISSFGIGGVNAHIVIEEYMPKANSEHTATEQPNVIVLSAKNKSRLIDRASQLLEVIRNKKYTDQDLHRIAYTLQVGREEMDERLACVAGTMQELEEKLQAFVDGKEETDEFFRGQSHRNKETQTIFTADEDMALALDAWIRKRKYAKLADLWVKGVSIQWNTLYGETKPRLISLPSYPFAKDHYWVPAKEHSERDKKELVNAIEDRAACFLTKQWSLSPIGSAVPGTRTVAILCCQETADLAAEVSSYFPNHLLIDVSRIENDQSDIDWKEFDGLVDVIGCGWDDEGRLDWIEWVQRLVEFGHKEGLRLLCVTKGLESFQNTSVRMAGASRAGLYRMLQCEYSHLISRHMDAEEVTDHRRLAKLIADEFYSDSYDAEVCYRDGLRYQAFLKAHPETGKATEQSAVFPKDHVLLITGGTRGIGLLCARHFAECYGVKKLVLTGREQLPPREEWARFKTSNTSLAEKIQAVRELEAKGVQVEMLSLTLSDDAQVEQTLQHIKRTLGPIGGVIHCAGLTDMDTLAFIRKTSDDIQRVLEPKVSGLTTLYRHVCNEPLQFFVLFSSVSAIIPELSAGQADYAMANSYMDYFAEAHQKHAPIISVQWPNWKETGMGEVTNQAYRDSGLLSITNSEGLRFLDQIVSKKFGPVVLPAMANQTNWEPELLMKRRKPHEGGLQEAALQSPPARDIEEADEVSKCDGLLSETQSWLIDLFTEELRIDREDFEIDGLFQDYGVDSIILAQVLQRINRKLEAALDPSILYEYPTIQRFADWLIGSYSERLSALFGGRISDASAPLENKIEAEASVPGKDRALTPQIQAPAILSPDSHAEGIAVVGLSCRFPGAETLESYWSLLSEGRSSIGPIPAERWGCKTPYYAGVIDGVSYFDPDFFLLHEEDVRAMDPQALLVLEECLKLLYHAGYTPEEIKGKPVGVYIGGRSQHKPDEDSLDHAKNPIVTVGQNYLAANLSQFFDVRGPSVVVDTACSSALVGMNMAIQALRGGDIQSAIVGGVSLLSSDASHRLFDRRGILSKHSSFHVFDERADGVVLGEGVGMVMLKTVKQALEDGDIIYAVVKAASVNNDGRTAGPATPNLEAQKEVMKDALFKSGKKPEDISYLEANGSGSIVTDLLELKAIQSVYRSGHSSPLSLGSIKPNIGHPLCAEGIASFIKVVLMLKERRFVPFLSGEKEMAHFDQQKANITFSRALEKWTDSQPTAAINCFADGGTNAHVIVEAWEKDEKHAIKRSPISPPQLKKRMLSPGEPKLEAETSKMTAANIWDTYEVEV.

Positions 141 to 481 (AVITDRGMHQ…ELPEIETSYT (341 aa)) are adenylation 1. In terms of domain architecture, Carrier 1 spans 590–667 (RVREEIQKHL…RLASYLSEHE (78 aa)). Serine 627 carries the O-(pantetheine 4'-phosphoryl)serine modification. The segment at 690-989 (QATFQPLSEV…NMLPIRSELN (300 aa)) is condensation. The interval 1181–1578 (TYRELDEKST…EHPGILECVV (398 aa)) is adenylation 2. Residues 1654 to 1729 (TSPKNIQDTV…NISQYITEQR (76 aa)) enclose the Carrier 2 domain. Serine 1689 bears the O-(pantetheine 4'-phosphoryl)serine mark. The 427-residue stretch at 1760–2186 (DDSVAIIGIS…GTNTHAIFEQ (427 aa)) folds into the Ketosynthase family 3 (KS3) 1 domain. Active-site for beta-ketoacyl synthase 1 activity residues include cysteine 1932, histidine 2068, and histidine 2108. The N-terminal hotdog fold stretch occupies residues 2374–2499 (HPLLHQNTSD…GSAELASAAE (126 aa)). The PKS/mFAS DH domain maps to 2374–2661 (HPLLHQNTSD…TRVLEGEVHT (288 aa)). Catalysis depends on histidine 2403, which acts as the Proton acceptor; for dehydratase activity. Residues 2513 to 2661 (GKGKMSPDQF…TRVLEGEVHT (149 aa)) form a C-terminal hotdog fold region. The Proton donor; for dehydratase activity role is filled by aspartate 2575. 2 consecutive Carrier domains span residues 3114–3188 (RKLE…VAAY) and 3212–3286 (SSLE…TVEH). 2 positions are modified to O-(pantetheine 4'-phosphoryl)serine: serine 3148 and serine 3246. Residues 3291–3314 (VQEREKPEGQEELQTKSSEAPKIT) form a disordered region. Residues 3339-3779 (FEPVAIVGIS…GVNAHIVIEE (441 aa)) form the Ketosynthase family 3 (KS3) 2 domain. Catalysis depends on for beta-ketoacyl synthase 2 activity residues cysteine 3511, histidine 3646, and histidine 3695. Residues 3839–3872 (REEMDERLACVAGTMQELEEKLQAFVDGKEETDE) are a coiled coil. One can recognise a Carrier 5 domain in the interval 4459–4536 (GLLSETQSWL…RFADWLIGSY (78 aa)). Residue serine 4496 is modified to O-(pantetheine 4'-phosphoryl)serine. The Ketosynthase family 3 (KS3) 3 domain maps to 4588-4992 (AEGIAVVGLS…GTNAHVIVEA (405 aa)). Cysteine 4743 serves as the catalytic For beta-ketoacyl synthase 3 activity.

It belongs to the ATP-dependent AMP-binding enzyme family. The cofactor is pantetheine 4'-phosphate.

It localises to the cytoplasm. It functions in the pathway antibiotic biosynthesis; bacillaene biosynthesis. Functionally, involved in some intermediate steps for the synthesis of the antibiotic polyketide bacillaene which is involved in secondary metabolism. The chain is Polyketide synthase PksJ (pksJ) from Bacillus subtilis (strain 168).